Reading from the N-terminus, the 145-residue chain is Basic phospholipase A2 S11-61 (145 aa).

A signal peptide spans 1–19 (MYPVHLLVLLAVCVSLLGA). A propeptide spanning residues 20-27 (SNIPPQPL) is cleaved from the precursor. Disulfide bonds link cysteine 38–cysteine 98, cysteine 54–cysteine 144, cysteine 56–cysteine 72, cysteine 71–cysteine 125, cysteine 78–cysteine 118, cysteine 87–cysteine 111, and cysteine 105–cysteine 116. The Ca(2+) site is built by tyrosine 55, glycine 57, and glycine 59. The active site involves histidine 75. Position 76 (aspartate 76) interacts with Ca(2+). The active site involves aspartate 119.

Belongs to the phospholipase A2 family. Group I subfamily. D49 sub-subfamily. Ca(2+) serves as cofactor. As to expression, expressed by the venom gland.

It localises to the secreted. It catalyses the reaction a 1,2-diacyl-sn-glycero-3-phosphocholine + H2O = a 1-acyl-sn-glycero-3-phosphocholine + a fatty acid + H(+). Functionally, snake venom phospholipase A2 (PLA2) that inhibits collagen-induced platelet aggregation. PLA2 catalyzes the calcium-dependent hydrolysis of the 2-acyl groups in 3-sn-phosphoglycerides. The polypeptide is Basic phospholipase A2 S11-61 (Austrelaps superbus (Lowland copperhead snake)).